The primary structure comprises 59 residues: Small, acid-soluble spore protein C1 (59 aa).

It belongs to the alpha/beta-type SASP family. In terms of processing, SASP are degraded in the first minutes of spore germination and provide amino acids for both new protein synthesis and metabolism.

Functionally, SASP are bound to spore DNA. They are double-stranded DNA-binding proteins that cause DNA to change to an a-like conformation. They protect the DNA backbone from chemical and enzymatic cleavage and are thus involved in dormant spore's high resistance to UV light. The sequence is that of Small, acid-soluble spore protein C1 (sspC1) from Clostridium perfringens (strain 13 / Type A).